The primary structure comprises 451 residues: Phosphoglucosamine mutase (451 aa).

Residue S107 is the Phosphoserine intermediate of the active site. Positions 107, 246, 248, and 250 each coordinate Mg(2+). Position 107 is a phosphoserine (S107).

It belongs to the phosphohexose mutase family. Requires Mg(2+) as cofactor. Activated by phosphorylation.

The catalysed reaction is alpha-D-glucosamine 1-phosphate = D-glucosamine 6-phosphate. Catalyzes the conversion of glucosamine-6-phosphate to glucosamine-1-phosphate. This Burkholderia cenocepacia (strain ATCC BAA-245 / DSM 16553 / LMG 16656 / NCTC 13227 / J2315 / CF5610) (Burkholderia cepacia (strain J2315)) protein is Phosphoglucosamine mutase.